Reading from the N-terminus, the 151-residue chain is MLDFGELLPLQPPTIPAHQLPPAALAYFGDAVYELFIRLLFLTPPQRINAYHRQVVAHVRAESQARYMDFLWEYCTETERSIFRQGRNAAADGPKRVAAKIYRQATGFEALLGYLYLTNPQRLQEIFQLLAGHIRSEVENKTHAAESPSEM.

Asp-30 is a catalytic residue.

This sequence belongs to the MrnC RNase family. Homodimer. It depends on Mg(2+) as a cofactor.

Its subcellular location is the cytoplasm. Its function is as follows. Involved in correct processing of both the 5' and 3' ends of 23S rRNA precursor. Processes 30S rRNA precursor transcript even in absence of ribonuclease 3 (Rnc); Rnc processes 30S rRNA into smaller rRNA precursors. This Thermosynechococcus vestitus (strain NIES-2133 / IAM M-273 / BP-1) protein is Mini-ribonuclease 3.